Here is a 430-residue protein sequence, read N- to C-terminus: Adenylosuccinate synthetase (430 aa).

GTP-binding positions include 12–18 and 40–42; these read GDEGKGK and GHT. Residue Asp-13 is the Proton acceptor of the active site. Asp-13 and Gly-40 together coordinate Mg(2+). IMP-binding positions include 13–16, 38–41, Thr-129, Arg-143, Gln-223, Thr-238, and Arg-302; these read DEGK and NAGH. The active-site Proton donor is His-41. 298–304 lines the substrate pocket; sequence TTTGRPR. GTP is bound by residues Arg-304, 330–332, and 412–414; these read KLD and SVG.

The protein belongs to the adenylosuccinate synthetase family. Homodimer. The cofactor is Mg(2+).

The protein localises to the cytoplasm. It catalyses the reaction IMP + L-aspartate + GTP = N(6)-(1,2-dicarboxyethyl)-AMP + GDP + phosphate + 2 H(+). It participates in purine metabolism; AMP biosynthesis via de novo pathway; AMP from IMP: step 1/2. Functionally, plays an important role in the de novo pathway of purine nucleotide biosynthesis. Catalyzes the first committed step in the biosynthesis of AMP from IMP. This chain is Adenylosuccinate synthetase, found in Desulforudis audaxviator (strain MP104C).